Reading from the N-terminus, the 321-residue chain is DNA-directed RNA polymerase subunit alpha (321 aa).

The segment at 1 to 235 is alpha N-terminal domain (alpha-NTD); it reads MAYQIECLET…DLFSPLKEVP (235 aa). The segment at 252-321 is alpha C-terminal domain (alpha-CTD); the sequence is QIPIEQLNLS…TLPPQKAARN (70 aa).

It belongs to the RNA polymerase alpha chain family. Homodimer. In cyanobacteria the RNAP catalytic core is composed of 2 alpha, 1 beta, 1 beta', 1 gamma and 1 omega subunit. When a sigma factor is associated with the core the holoenzyme is formed, which can initiate transcription.

The catalysed reaction is RNA(n) + a ribonucleoside 5'-triphosphate = RNA(n+1) + diphosphate. DNA-dependent RNA polymerase catalyzes the transcription of DNA into RNA using the four ribonucleoside triphosphates as substrates. The chain is DNA-directed RNA polymerase subunit alpha from Thermosynechococcus vestitus (strain NIES-2133 / IAM M-273 / BP-1).